Consider the following 738-residue polypeptide: Polyphosphate kinase (738 aa).

Residues 1–48 are disordered; it reads MIGNDRWVTEIETGPVTEARPDTNAREPGDRTPAAPPAATPAATTDQL. The segment covering 19–30 has biased composition (basic and acidic residues); it reads ARPDTNAREPGD. Asparagine 91 lines the ATP pocket. Mg(2+) contacts are provided by arginine 427 and arginine 457. Histidine 487 acts as the Phosphohistidine intermediate in catalysis. Residues tyrosine 520, arginine 620, and histidine 648 each coordinate ATP.

This sequence belongs to the polyphosphate kinase 1 (PPK1) family. Requires Mg(2+) as cofactor. An intermediate of this reaction is the autophosphorylated ppk in which a phosphate is covalently linked to a histidine residue through a N-P bond.

It catalyses the reaction [phosphate](n) + ATP = [phosphate](n+1) + ADP. In terms of biological role, catalyzes the reversible transfer of the terminal phosphate of ATP to form a long-chain polyphosphate (polyP). In Mycobacterium ulcerans (strain Agy99), this protein is Polyphosphate kinase.